A 173-amino-acid polypeptide reads, in one-letter code: Cyclic pyranopterin monophosphate synthase (173 aa).

Residues 75 to 77 and 117 to 118 each bind substrate; these read MCH and ME. D132 is a catalytic residue. The tract at residues 152-173 is disordered; that stretch reads SGGKSGHYQRENSSVGGFANEQ. A compositionally biased stretch (polar residues) spans 162–173; it reads ENSSVGGFANEQ.

This sequence belongs to the MoaC family. As to quaternary structure, homohexamer; trimer of dimers.

The enzyme catalyses (8S)-3',8-cyclo-7,8-dihydroguanosine 5'-triphosphate = cyclic pyranopterin phosphate + diphosphate. It participates in cofactor biosynthesis; molybdopterin biosynthesis. Catalyzes the conversion of (8S)-3',8-cyclo-7,8-dihydroguanosine 5'-triphosphate to cyclic pyranopterin monophosphate (cPMP). The chain is Cyclic pyranopterin monophosphate synthase from Geobacillus sp. (strain WCH70).